Here is a 435-residue protein sequence, read N- to C-terminus: Glutamate-1-semialdehyde 2,1-aminomutase (435 aa).

Lysine 266 is modified (N6-(pyridoxal phosphate)lysine).

The protein belongs to the class-III pyridoxal-phosphate-dependent aminotransferase family. HemL subfamily. In terms of assembly, homodimer. The cofactor is pyridoxal 5'-phosphate.

It is found in the cytoplasm. It carries out the reaction (S)-4-amino-5-oxopentanoate = 5-aminolevulinate. It participates in porphyrin-containing compound metabolism; protoporphyrin-IX biosynthesis; 5-aminolevulinate from L-glutamyl-tRNA(Glu): step 2/2. The polypeptide is Glutamate-1-semialdehyde 2,1-aminomutase (Helicobacter hepaticus (strain ATCC 51449 / 3B1)).